The primary structure comprises 128 residues: UPF0325 protein YaeH (128 aa).

The protein belongs to the UPF0325 family.

The protein is UPF0325 protein YaeH of Escherichia fergusonii (strain ATCC 35469 / DSM 13698 / CCUG 18766 / IAM 14443 / JCM 21226 / LMG 7866 / NBRC 102419 / NCTC 12128 / CDC 0568-73).